The following is a 100-amino-acid chain: Large ribosomal subunit protein uL23 (100 aa).

This sequence belongs to the universal ribosomal protein uL23 family. Part of the 50S ribosomal subunit. Contacts protein L29, and trigger factor when it is bound to the ribosome.

Functionally, one of the early assembly proteins it binds 23S rRNA. One of the proteins that surrounds the polypeptide exit tunnel on the outside of the ribosome. Forms the main docking site for trigger factor binding to the ribosome. The protein is Large ribosomal subunit protein uL23 of Edwardsiella ictaluri (strain 93-146).